The sequence spans 141 residues: Hemoglobin subunit alpha (141 aa).

The region spanning valine 1 to arginine 141 is the Globin domain. At serine 3 the chain carries Phosphoserine. N6-succinyllysine is present on lysine 7. Phosphothreonine is present on threonine 8. Lysine 11 bears the N6-succinyllysine mark. Position 16 is an N6-acetyllysine; alternate (lysine 16). Lysine 16 carries the post-translational modification N6-succinyllysine; alternate. Tyrosine 24 is modified (phosphotyrosine). Serine 35 carries the phosphoserine modification. Lysine 40 carries the post-translational modification N6-succinyllysine. At serine 49 the chain carries Phosphoserine. Position 58 (histidine 58) interacts with O2. Position 87 (histidine 87) interacts with heme b. Serine 102 carries the phosphoserine modification. Threonine 108 carries the post-translational modification Phosphothreonine. Serine 124 carries the phosphoserine modification. Phosphothreonine occurs at positions 134 and 137. Phosphoserine is present on serine 138.

The protein belongs to the globin family. As to quaternary structure, heterotetramer of two alpha chains and two beta chains. Red blood cells.

Involved in oxygen transport from the lung to the various peripheral tissues. Its function is as follows. Hemopressin acts as an antagonist peptide of the cannabinoid receptor CNR1. Hemopressin-binding efficiently blocks cannabinoid receptor CNR1 and subsequent signaling. In Vulpes vulpes (Red fox), this protein is Hemoglobin subunit alpha (HBA).